We begin with the raw amino-acid sequence, 174 residues long: Probable inosine/xanthosine triphosphatase (174 aa).

Aspartate 63 serves as a coordination point for Mg(2+).

This sequence belongs to the YjjX NTPase family. In terms of assembly, homodimer. Requires Mg(2+) as cofactor. It depends on Mn(2+) as a cofactor.

The enzyme catalyses XTP + H2O = XDP + phosphate + H(+). It catalyses the reaction ITP + H2O = IDP + phosphate + H(+). In terms of biological role, phosphatase that hydrolyzes non-canonical purine nucleotides such as XTP and ITP to their respective diphosphate derivatives. Probably excludes non-canonical purines from DNA/RNA precursor pool, thus preventing their incorporation into DNA/RNA and avoiding chromosomal lesions. This chain is Probable inosine/xanthosine triphosphatase, found in Methanocella arvoryzae (strain DSM 22066 / NBRC 105507 / MRE50).